The following is a 417-amino-acid chain: MPYKVKDISLAPQGEKKIRWVQEHMPVLERIKSDFSEEKPFKGVTIGSCLHLEPKTINLGLTLQAGGAEVAMTGCNPLSTQDDATAAGAKMGLNMYGWRGETNEEYYENIHRVLDHEPEILIDDGADMIFLVHRERPELLDGIIGACEETTTGINRLRAMAADGALKFPVMAVNDAYTKYLFDNRYGTGQSTFDSIMGTTNMLIAGKTVVVCGYGWCGRGIAMRAEGLGASVIVTEVDPIRALEARMDGFRVMKVSDAVKEADILITATGNTDVVSESEFMNMKDGCVMANSGHFNVEINREALEELSRETGKVKEDIEVFIMPDGRKIYLLAEGRLVNLASERGQGHPAEIMDMSFAMQALSARHLLQEKPDPGVYRAPDEIDLMVARMKLDAMGIEIDELTEKQRLYLENWEEGT.

2 residues coordinate substrate: Asp-124 and Glu-149. An NAD(+)-binding site is contributed by 150–152 (TTT). Residues Lys-179 and Asp-183 each coordinate substrate. NAD(+)-binding positions include Asn-184, 213–218 (GYGWCG), Glu-236, Asn-271, 292–294 (SGH), and Asn-339.

Belongs to the adenosylhomocysteinase family. NAD(+) is required as a cofactor.

The protein resides in the cytoplasm. It carries out the reaction S-inosyl-L-homocysteine + H2O = L-homocysteine + inosine. It participates in amino-acid biosynthesis; S-adenosyl-L-methionine biosynthesis. Functionally, catalyzes the hydrolysis of S-inosyl-L-homocysteine (SIH) to L-homocysteine (Hcy) and inosine. Likely functions in a S-adenosyl-L-methionine (SAM) recycling pathway from S-adenosyl-L-homocysteine (SAH) produced from SAM-dependent methylation reactions. Can also catalyze the reverse reaction in vitro, i.e. the synthesis of SIH from Hcy and inosine. This is S-inosyl-L-homocysteine hydrolase from Methanothermobacter thermautotrophicus (strain ATCC 29096 / DSM 1053 / JCM 10044 / NBRC 100330 / Delta H) (Methanobacterium thermoautotrophicum).